The following is a 298-amino-acid chain: MATRRALHFVFKVKNRFQTVHFFRDVLGMQVLRHEEFEEGCKAACNGPYDGKWSKTMVGFGPEDDHFVAELTYNYGIGDYKLGNDFMGITLASSQAVSNARKLEWPLSKVAEGIFETEAPGGYKFYLQDRSPSQSDPVLKVTLAVSDLQKSLNYWSNLLGMKIYEQDEEKQRALLGYADNQCKLELQGIQGAVDHAAAFGRIAFSCPQKELPDLEDLMKRESHSILTPLVSLDTPGKATVQVVILADPDGHEICFVGDEAFRELSKMDPKGSKLLDDAMEADKSDEWFATRNKPKASG.

The VOC 1 domain occupies 5–130; that stretch reads RALHFVFKVK…GGYKFYLQDR (126 aa). At K109 the chain carries N6-succinyllysine. The residue at position 131 (S131) is a Phosphoserine. One can recognise a VOC 2 domain in the interval 137–258; that stretch reads PVLKVTLAVS…DGHEICFVGD (122 aa). An N6-succinyllysine modification is found at K273.

It belongs to the glyoxalase I family. Interacts with NUDT9.

It is found in the mitochondrion. The protein is Glyoxalase domain-containing protein 4 (Glod4) of Mus musculus (Mouse).